Here is a 118-residue protein sequence, read N- to C-terminus: Large ribosomal subunit protein bL20 (118 aa).

It belongs to the bacterial ribosomal protein bL20 family.

In terms of biological role, binds directly to 23S ribosomal RNA and is necessary for the in vitro assembly process of the 50S ribosomal subunit. It is not involved in the protein synthesizing functions of that subunit. The polypeptide is Large ribosomal subunit protein bL20 (Staphylococcus carnosus (strain TM300)).